Reading from the N-terminus, the 454-residue chain is UPF0210 protein Mhun_2657 (454 aa).

Belongs to the UPF0210 family.

The chain is UPF0210 protein Mhun_2657 from Methanospirillum hungatei JF-1 (strain ATCC 27890 / DSM 864 / NBRC 100397 / JF-1).